Here is a 677-residue protein sequence, read N- to C-terminus: Membrane-associated tyrosine- and threonine-specific cdc2-inhibitory kinase wee-1.3 (677 aa).

The segment covering 1–22 has biased composition (polar residues); the sequence is MDDTEGNSSMDSIRNGQSSPLP. A disordered region spans residues 1-30; that stretch reads MDDTEGNSSMDSIRNGQSSPLPQVTPRLPQ. The Protein kinase domain occupies 108 to 355; the sequence is FQIDEIIGRG…SRDLLDHPVI (248 aa). ATP contacts are provided by residues 114–122 and Lys-137; that span reads IGRGSFGEV. Catalysis depends on Asp-228, which acts as the Proton acceptor. Mg(2+) is bound by residues Asn-233 and Asp-246. 2 disordered regions span residues 478–526 and 632–677; these read FDND…GTPR and EPSN…GDEV. Polar residues predominate over residues 489-499; it reads ATCSSSNSSAI. A compositionally biased stretch (basic and acidic residues) spans 638-652; sequence TVDHHTILEQSESPR.

This sequence belongs to the protein kinase superfamily. Ser/Thr protein kinase family. WEE1 subfamily.

Its subcellular location is the golgi apparatus membrane. It localises to the cytoplasm. The enzyme catalyses L-seryl-[protein] + ATP = O-phospho-L-seryl-[protein] + ADP + H(+). It carries out the reaction L-threonyl-[protein] + ATP = O-phospho-L-threonyl-[protein] + ADP + H(+). In terms of biological role, acts as a negative regulator of entry into mitosis (G2 to M transition) by phosphorylation of the CDK1 kinase during oocyte maturation. Required for oocyte maturation, embryonic development, germline proliferation and initiation of meiosis during spermatogenesis. Required for chromosome structure during mitosis and negative regulation of nuclear envelope breakdown. This is Membrane-associated tyrosine- and threonine-specific cdc2-inhibitory kinase wee-1.3 (wee-1.3) from Caenorhabditis elegans.